A 278-amino-acid chain; its full sequence is Glutamate racemase (278 aa).

Substrate-binding positions include 13-14 (DS) and 45-46 (YG). The active-site Proton donor/acceptor is Cys-76. Residue 77–78 (NT) coordinates substrate. Cys-185 (proton donor/acceptor) is an active-site residue. Position 186-187 (186-187 (TH)) interacts with substrate.

The protein belongs to the aspartate/glutamate racemases family.

It carries out the reaction L-glutamate = D-glutamate. It participates in cell wall biogenesis; peptidoglycan biosynthesis. Provides the (R)-glutamate required for cell wall biosynthesis. This is Glutamate racemase from Gloeothece citriformis (strain PCC 7424) (Cyanothece sp. (strain PCC 7424)).